Consider the following 329-residue polypeptide: Cytosolic arginine sensor for mTORC1 subunit 2 (329 aa).

ACT domains lie at 72-139 and 262-322; these read ADAT…MHTL and ELWK…NALQ.

Belongs to the GATS family. May form homodimers and heterodimers.

Its subcellular location is the cytoplasm. The protein resides in the cytosol. Functions as a negative regulator of the TORC1 signaling pathway. This is Cytosolic arginine sensor for mTORC1 subunit 2 from Xenopus laevis (African clawed frog).